The sequence spans 462 residues: Tubulin alpha-4 chain (462 aa).

Residues Gln-11, Glu-82, Ser-151, Gly-155, Thr-156, Thr-190, Asn-217, and Asn-239 each coordinate GTP. A Mg(2+)-binding site is contributed by Glu-82. Glu-265 is an active-site residue.

Belongs to the tubulin family. Dimer of alpha and beta chains. A typical microtubule is a hollow water-filled tube with an outer diameter of 25 nm and an inner diameter of 15 nM. Alpha-beta heterodimers associate head-to-tail to form protofilaments running lengthwise along the microtubule wall with the beta-tubulin subunit facing the microtubule plus end conferring a structural polarity. Microtubules usually have 13 protofilaments but different protofilament numbers can be found in some organisms and specialized cells. The cofactor is Mg(2+).

It is found in the cytoplasm. The protein resides in the cytoskeleton. The enzyme catalyses GTP + H2O = GDP + phosphate + H(+). In terms of biological role, tubulin is the major constituent of microtubules, a cylinder consisting of laterally associated linear protofilaments composed of alpha- and beta-tubulin heterodimers. Microtubules grow by the addition of GTP-tubulin dimers to the microtubule end, where a stabilizing cap forms. Below the cap, tubulin dimers are in GDP-bound state, owing to GTPase activity of alpha-tubulin. This is Tubulin alpha-4 chain (alphaTub67C) from Drosophila melanogaster (Fruit fly).